A 140-amino-acid chain; its full sequence is Holo-[acyl-carrier-protein] synthase (140 aa).

Mg(2+) contacts are provided by Asp8 and Glu62.

It belongs to the P-Pant transferase superfamily. AcpS family. The cofactor is Mg(2+).

The protein localises to the cytoplasm. The catalysed reaction is apo-[ACP] + CoA = holo-[ACP] + adenosine 3',5'-bisphosphate + H(+). Functionally, transfers the 4'-phosphopantetheine moiety from coenzyme A to a Ser of acyl-carrier-protein. The polypeptide is Holo-[acyl-carrier-protein] synthase (Cupriavidus taiwanensis (strain DSM 17343 / BCRC 17206 / CCUG 44338 / CIP 107171 / LMG 19424 / R1) (Ralstonia taiwanensis (strain LMG 19424))).